We begin with the raw amino-acid sequence, 259 residues long: Type III pantothenate kinase (259 aa).

Asp6–Val13 contributes to the ATP binding site. Gly107–Arg110 provides a ligand contact to substrate. The active-site Proton acceptor is Asp109. Asp129 lines the K(+) pocket. ATP is bound at residue Thr132. Thr184 serves as a coordination point for substrate.

Belongs to the type III pantothenate kinase family. Homodimer. Requires NH4(+) as cofactor. It depends on K(+) as a cofactor.

The protein localises to the cytoplasm. It carries out the reaction (R)-pantothenate + ATP = (R)-4'-phosphopantothenate + ADP + H(+). Its pathway is cofactor biosynthesis; coenzyme A biosynthesis; CoA from (R)-pantothenate: step 1/5. Catalyzes the phosphorylation of pantothenate (Pan), the first step in CoA biosynthesis. The sequence is that of Type III pantothenate kinase from Ruegeria pomeroyi (strain ATCC 700808 / DSM 15171 / DSS-3) (Silicibacter pomeroyi).